Here is a 364-residue protein sequence, read N- to C-terminus: Peptide chain release factor 1 (364 aa).

Q230 carries the N5-methylglutamine modification.

This sequence belongs to the prokaryotic/mitochondrial release factor family. In terms of processing, methylated by PrmC. Methylation increases the termination efficiency of RF1.

The protein resides in the cytoplasm. Its function is as follows. Peptide chain release factor 1 directs the termination of translation in response to the peptide chain termination codons UAG and UAA. The polypeptide is Peptide chain release factor 1 (Acidothermus cellulolyticus (strain ATCC 43068 / DSM 8971 / 11B)).